A 330-amino-acid polypeptide reads, in one-letter code: RNA polymerase sigma factor RpoS (330 aa).

Positions 56–89 (DATQLYLGEIGYSPLLTAEEEVYFARRALRGDVA) are sigma-70 factor domain-1. Residues 94–164 (MIESNLRLVV…ERAIMNQTRT (71 aa)) are sigma-70 factor domain-2. The short motif at 118 to 121 (DLIE) is the Interaction with polymerase core subunit RpoC element. Residues 174 to 249 (ELNVYLRTAR…DEKENGPEDT (76 aa)) are sigma-70 factor domain-3. A sigma-70 factor domain-4 region spans residues 262–315 (WLFELNAKQREVLARRFGLLGYEAATLEDVGREIGLTRERVRQIQVEGLRRLRE). Positions 288-307 (LEDVGREIGLTRERVRQIQV) form a DNA-binding region, H-T-H motif.

It belongs to the sigma-70 factor family. RpoS subfamily. As to quaternary structure, interacts with the RNA polymerase core enzyme.

The protein localises to the cytoplasm. Sigma factors are initiation factors that promote the attachment of RNA polymerase to specific initiation sites and are then released. This sigma factor is the master transcriptional regulator of the stationary phase and the general stress response. This chain is RNA polymerase sigma factor RpoS, found in Salmonella dublin.